Here is a 1167-residue protein sequence, read N- to C-terminus: Pesticidal crystal protein Cry1Ja (1167 aa).

Belongs to the delta endotoxin family.

In terms of biological role, promotes colloidosmotic lysis by binding to the midgut epithelial cells of many lepidopteran larvae. The polypeptide is Pesticidal crystal protein Cry1Ja (cry1Ja) (Bacillus thuringiensis).